The chain runs to 165 residues: NADPH-dependent 7-cyano-7-deazaguanine reductase (165 aa).

The Thioimide intermediate role is filled by cysteine 56. Aspartate 63 acts as the Proton donor in catalysis. Substrate-binding positions include 78–80 (VES) and 97–98 (HE).

The protein belongs to the GTP cyclohydrolase I family. QueF type 1 subfamily.

It is found in the cytoplasm. The catalysed reaction is 7-aminomethyl-7-carbaguanine + 2 NADP(+) = 7-cyano-7-deazaguanine + 2 NADPH + 3 H(+). It functions in the pathway tRNA modification; tRNA-queuosine biosynthesis. Is totally inhibited by 4-aminobenzylcyanide in vitro. Functionally, catalyzes the NADPH-dependent reduction of 7-cyano-7-deazaguanine (preQ0) to 7-aminomethyl-7-deazaguanine (preQ1), a late step in the queuosine pathway. Is highly specific for its natural substrate preQ0, since it cannot use various aliphatic, aromatic and heterocyclic nitriles, although it can reduce the substrate analog 5-cyanopyrrolo[2,3-d]pyrimidin-4-one with lesser efficiency. This chain is NADPH-dependent 7-cyano-7-deazaguanine reductase, found in Geobacillus kaustophilus (strain HTA426).